We begin with the raw amino-acid sequence, 441 residues long: Enolase (441 aa).

Gln-164 serves as a coordination point for (2R)-2-phosphoglycerate. Residue Glu-206 is the Proton donor of the active site. Mg(2+) is bound by residues Asp-243, Glu-289, and Asp-316. Lys-341, Arg-370, Ser-371, and Lys-392 together coordinate (2R)-2-phosphoglycerate. Lys-341 (proton acceptor) is an active-site residue.

It belongs to the enolase family. Mg(2+) is required as a cofactor.

The protein resides in the cytoplasm. It localises to the secreted. It is found in the cell surface. It catalyses the reaction (2R)-2-phosphoglycerate = phosphoenolpyruvate + H2O. It functions in the pathway carbohydrate degradation; glycolysis; pyruvate from D-glyceraldehyde 3-phosphate: step 4/5. Its function is as follows. Catalyzes the reversible conversion of 2-phosphoglycerate (2-PG) into phosphoenolpyruvate (PEP). It is essential for the degradation of carbohydrates via glycolysis. The polypeptide is Enolase (Leuconostoc mesenteroides subsp. mesenteroides (strain ATCC 8293 / DSM 20343 / BCRC 11652 / CCM 1803 / JCM 6124 / NCDO 523 / NBRC 100496 / NCIMB 8023 / NCTC 12954 / NRRL B-1118 / 37Y)).